A 130-amino-acid chain; its full sequence is Con-Ins M1 (130 aa).

Positions 1 to 21 (MTTSSYFLLVALGLLLYVCQS) are cleaved as a signal peptide. 4 disulfides stabilise this stretch: Cys29–Cys107, Cys41–Cys110, Cys53–Cys123, and Cys109–Cys114. Residue Pro34 is modified to 4-hydroxyproline; partial. Positions 59–92 (AHGGTNDARATTGRALSLSKRRGFLSMLKRRGKR) are cleaved as a propeptide — c peptide. The residue at position 118 (Glu118) is a 4-carboxyglutamate; partial. Serine amide is present on Ser129.

This sequence belongs to the insulin family. Heterodimer of A and B chains; disulfide-linked. In terms of tissue distribution, expressed by the venom gland.

It is found in the secreted. This venom insulin facilitates prey capture by rapidly inducing hypoglycemic shock. Intraperitoneal injection of this peptide into zebrafish lowers blood glucose with the same potency than human insulin. In vivo, when applied to water, this peptide reduces overall locomotor activity of zebrafish larvae, observed as a significant decrease in the percentage of time spent swimming and movement frequency. The sequence is that of Con-Ins M1 from Conus marmoreus (Marble cone).